The chain runs to 144 residues: Fluoride-specific ion channel FluC (144 aa).

4 consecutive transmembrane segments (helical) span residues 7–27, 33–53, 71–91, and 105–125; these read LIVM…SVAA, FIPW…IGFF, LFVM…SLQT, and VNVA…HITA. Na(+) contacts are provided by G79 and T82.

Belongs to the fluoride channel Fluc/FEX (TC 1.A.43) family.

The protein resides in the cell inner membrane. It catalyses the reaction fluoride(in) = fluoride(out). Its activity is regulated as follows. Na(+) is not transported, but it plays an essential structural role and its presence is essential for fluoride channel function. Fluoride-specific ion channel. Important for reducing fluoride concentration in the cell, thus reducing its toxicity. The sequence is that of Fluoride-specific ion channel FluC from Gluconobacter oxydans (strain 621H) (Gluconobacter suboxydans).